A 211-amino-acid polypeptide reads, in one-letter code: Thiamine-phosphate synthase (211 aa).

4-amino-2-methyl-5-(diphosphooxymethyl)pyrimidine-binding positions include 37 to 41 (QLRIK) and Asn-69. Mg(2+) is bound by residues Asp-70 and Asp-89. Position 108 (Ser-108) interacts with 4-amino-2-methyl-5-(diphosphooxymethyl)pyrimidine. 134-136 (TQT) is a binding site for 2-[(2R,5Z)-2-carboxy-4-methylthiazol-5(2H)-ylidene]ethyl phosphate. Residue Lys-137 coordinates 4-amino-2-methyl-5-(diphosphooxymethyl)pyrimidine. 2-[(2R,5Z)-2-carboxy-4-methylthiazol-5(2H)-ylidene]ethyl phosphate is bound by residues Gly-166 and 186 to 187 (VS).

It belongs to the thiamine-phosphate synthase family. It depends on Mg(2+) as a cofactor.

The enzyme catalyses 2-[(2R,5Z)-2-carboxy-4-methylthiazol-5(2H)-ylidene]ethyl phosphate + 4-amino-2-methyl-5-(diphosphooxymethyl)pyrimidine + 2 H(+) = thiamine phosphate + CO2 + diphosphate. It carries out the reaction 2-(2-carboxy-4-methylthiazol-5-yl)ethyl phosphate + 4-amino-2-methyl-5-(diphosphooxymethyl)pyrimidine + 2 H(+) = thiamine phosphate + CO2 + diphosphate. The catalysed reaction is 4-methyl-5-(2-phosphooxyethyl)-thiazole + 4-amino-2-methyl-5-(diphosphooxymethyl)pyrimidine + H(+) = thiamine phosphate + diphosphate. It functions in the pathway cofactor biosynthesis; thiamine diphosphate biosynthesis; thiamine phosphate from 4-amino-2-methyl-5-diphosphomethylpyrimidine and 4-methyl-5-(2-phosphoethyl)-thiazole: step 1/1. Its function is as follows. Condenses 4-methyl-5-(beta-hydroxyethyl)thiazole monophosphate (THZ-P) and 2-methyl-4-amino-5-hydroxymethyl pyrimidine pyrophosphate (HMP-PP) to form thiamine monophosphate (TMP). This is Thiamine-phosphate synthase from Salmonella agona (strain SL483).